The primary structure comprises 428 residues: Maltoporin (428 aa).

Positions 1–24 (MTTLRKLPIALAVAAGVLSTQAMA) are cleaved as a signal peptide.

The protein belongs to the porin LamB (TC 1.B.3) family. As to quaternary structure, homotrimer formed of three 18-stranded antiparallel beta-barrels, containing three independent channels.

The protein resides in the cell outer membrane. It catalyses the reaction beta-maltose(in) = beta-maltose(out). Involved in the transport of maltose and maltodextrins. The protein is Maltoporin of Yersinia enterocolitica serotype O:8 / biotype 1B (strain NCTC 13174 / 8081).